Consider the following 305-residue polypeptide: 4-hydroxy-tetrahydrodipicolinate synthase 1 (305 aa).

Threonine 53 lines the pyruvate pocket. The active-site Proton donor/acceptor is tyrosine 141. Catalysis depends on lysine 169, which acts as the Schiff-base intermediate with substrate. Residue valine 209 coordinates pyruvate.

Belongs to the DapA family. In terms of assembly, homotetramer; dimer of dimers.

It is found in the cytoplasm. It carries out the reaction L-aspartate 4-semialdehyde + pyruvate = (2S,4S)-4-hydroxy-2,3,4,5-tetrahydrodipicolinate + H2O + H(+). It participates in amino-acid biosynthesis; L-lysine biosynthesis via DAP pathway; (S)-tetrahydrodipicolinate from L-aspartate: step 3/4. In terms of biological role, catalyzes the condensation of (S)-aspartate-beta-semialdehyde [(S)-ASA] and pyruvate to 4-hydroxy-tetrahydrodipicolinate (HTPA). The sequence is that of 4-hydroxy-tetrahydrodipicolinate synthase 1 from Streptomyces coelicolor (strain ATCC BAA-471 / A3(2) / M145).